A 290-amino-acid chain; its full sequence is Fat storage-inducing transmembrane protein 1 (290 aa).

5 helical membrane-spanning segments follow: residues 1-21 (MFLN…LGNT), 26-46 (HFHL…LWVS), 65-85 (SGWG…SFSV), 173-193 (LLLC…GPYL), and 205-225 (ILFL…LCLL).

It belongs to the FIT family. FIT1 subfamily.

Its subcellular location is the endoplasmic reticulum membrane. May play an important role in the formation of lipid droplets (LDs) which are storage organelles at the center of lipid and energy homeostasis. May directly bind to diacylglycerol (DAGs) and triacylglycerol. The chain is Fat storage-inducing transmembrane protein 1 (fitm1l) from Danio rerio (Zebrafish).